The primary structure comprises 568 residues: Proline--tRNA ligase (568 aa).

It belongs to the class-II aminoacyl-tRNA synthetase family. ProS type 1 subfamily. As to quaternary structure, homodimer.

The protein localises to the cytoplasm. The catalysed reaction is tRNA(Pro) + L-proline + ATP = L-prolyl-tRNA(Pro) + AMP + diphosphate. In terms of biological role, catalyzes the attachment of proline to tRNA(Pro) in a two-step reaction: proline is first activated by ATP to form Pro-AMP and then transferred to the acceptor end of tRNA(Pro). As ProRS can inadvertently accommodate and process non-cognate amino acids such as alanine and cysteine, to avoid such errors it has two additional distinct editing activities against alanine. One activity is designated as 'pretransfer' editing and involves the tRNA(Pro)-independent hydrolysis of activated Ala-AMP. The other activity is designated 'posttransfer' editing and involves deacylation of mischarged Ala-tRNA(Pro). The misacylated Cys-tRNA(Pro) is not edited by ProRS. This is Proline--tRNA ligase from Nitrosomonas eutropha (strain DSM 101675 / C91 / Nm57).